A 135-amino-acid chain; its full sequence is MAGSARSAMAAKALQTILNIGLLVLATILVIFLVKETFHLAKVLLISNEKDSSYQLIEGIVIYFLYFEFIALIVKYFQSGYHFPLRYFIYIGITAIIRLIIVDHKSPSDTLMYSAAILLLVVTLYLANSNRLKRE.

4 helical membrane passes run 14–34 (LQTI…IFLV), 54–74 (YQLI…ALIV), 82–102 (HFPL…LIIV), and 107–127 (PSDT…LYLA).

Belongs to the PsiE family.

Its subcellular location is the cell inner membrane. The chain is Protein PsiE homolog from Pectobacterium carotovorum subsp. carotovorum (strain PC1).